Here is a 330-residue protein sequence, read N- to C-terminus: Phosphate acyltransferase (330 aa).

The protein belongs to the PlsX family. As to quaternary structure, homodimer. Probably interacts with PlsY.

It localises to the cytoplasm. The catalysed reaction is a fatty acyl-[ACP] + phosphate = an acyl phosphate + holo-[ACP]. Its pathway is lipid metabolism; phospholipid metabolism. Its function is as follows. Catalyzes the reversible formation of acyl-phosphate (acyl-PO(4)) from acyl-[acyl-carrier-protein] (acyl-ACP). This enzyme utilizes acyl-ACP as fatty acyl donor, but not acyl-CoA. This is Phosphate acyltransferase from Campylobacter hominis (strain ATCC BAA-381 / DSM 21671 / CCUG 45161 / LMG 19568 / NCTC 13146 / CH001A).